The sequence spans 127 residues: Holo-[acyl-carrier-protein] synthase (127 aa).

Residues Asp9 and Glu58 each contribute to the Mg(2+) site.

It belongs to the P-Pant transferase superfamily. AcpS family. The cofactor is Mg(2+).

The protein localises to the cytoplasm. It catalyses the reaction apo-[ACP] + CoA = holo-[ACP] + adenosine 3',5'-bisphosphate + H(+). In terms of biological role, transfers the 4'-phosphopantetheine moiety from coenzyme A to a Ser of acyl-carrier-protein. The polypeptide is Holo-[acyl-carrier-protein] synthase (Shewanella baltica (strain OS195)).